The following is a 155-amino-acid chain: Cardio acceleratory peptide 2b (155 aa).

A signal peptide spans 1–26; sequence MKAIFSLYNIVSAILLLVLLAEFSTA. The propeptide occupies 27–33; that stretch reads ELNHDKN. Val47 is subject to Valine amide. Residues 50–85 constitute a propeptide that is removed on maturation; sequence SDPSLANSLRDASDAAVFDGLYGDASQEDYNEADYQ. Valine amide is present on Val96. A propeptide spanning residues 99-117 is cleaved from the precursor; it reads SDAELRKFAHLLALQQVLD. Leu134 is modified (leucine amide). A propeptide spanning residues 138–155 is cleaved from the precursor; sequence SVDAKAFSDASKGQQEFN.

Belongs to the pyrokinin family.

It is found in the secreted. CAP-1 and CAP-2, but not CAP-3 are ligands for the Capa receptor. CAP-1 and CAP-2 are probably components of the signal transduction pathway that leads to Malpighian tubule fluid secretion via the second messenger nitric oxide. This Drosophila pseudoobscura pseudoobscura (Fruit fly) protein is Cardio acceleratory peptide 2b.